We begin with the raw amino-acid sequence, 253 residues long: Triosephosphate isomerase (253 aa).

8-10 (NWK) provides a ligand contact to substrate. His-91 acts as the Electrophile in catalysis. Residue Glu-168 is the Proton acceptor of the active site. Substrate is bound by residues Gly-174, Ser-213, and 234–235 (GG).

This sequence belongs to the triosephosphate isomerase family. In terms of assembly, homodimer.

The protein localises to the cytoplasm. The catalysed reaction is D-glyceraldehyde 3-phosphate = dihydroxyacetone phosphate. It functions in the pathway carbohydrate biosynthesis; gluconeogenesis. The protein operates within carbohydrate degradation; glycolysis; D-glyceraldehyde 3-phosphate from glycerone phosphate: step 1/1. Involved in the gluconeogenesis. Catalyzes stereospecifically the conversion of dihydroxyacetone phosphate (DHAP) to D-glyceraldehyde-3-phosphate (G3P). The chain is Triosephosphate isomerase from Acidiphilium cryptum (strain JF-5).